A 293-amino-acid polypeptide reads, in one-letter code: Acetylglutamate kinase (293 aa).

Residues 68–69 (GG), R90, and N189 each bind substrate.

Belongs to the acetylglutamate kinase family. ArgB subfamily.

It localises to the cytoplasm. It carries out the reaction N-acetyl-L-glutamate + ATP = N-acetyl-L-glutamyl 5-phosphate + ADP. Its pathway is amino-acid biosynthesis; L-arginine biosynthesis; N(2)-acetyl-L-ornithine from L-glutamate: step 2/4. In terms of biological role, catalyzes the ATP-dependent phosphorylation of N-acetyl-L-glutamate. The chain is Acetylglutamate kinase from Caldicellulosiruptor saccharolyticus (strain ATCC 43494 / DSM 8903 / Tp8T 6331).